The sequence spans 452 residues: Cysteine--tRNA ligase (452 aa).

Cys35 is a binding site for Zn(2+). A 'HIGH' region motif is present at residues 37-47; it reads PTVYDRAHLGN. Zn(2+) contacts are provided by Cys215, His240, and Glu244. Positions 273–277 match the 'KMSKS' region motif; sequence KMSKS. Lys276 contributes to the ATP binding site.

The protein belongs to the class-I aminoacyl-tRNA synthetase family. In terms of assembly, monomer. Zn(2+) serves as cofactor.

Its subcellular location is the cytoplasm. It carries out the reaction tRNA(Cys) + L-cysteine + ATP = L-cysteinyl-tRNA(Cys) + AMP + diphosphate. This chain is Cysteine--tRNA ligase, found in Gluconobacter oxydans (strain 621H) (Gluconobacter suboxydans).